A 669-amino-acid chain; its full sequence is DNA ligase (669 aa).

NAD(+) is bound by residues 34 to 38 (DAEYD), 83 to 84 (SL), and glutamate 114. The N6-AMP-lysine intermediate role is filled by lysine 116. NAD(+)-binding residues include arginine 137, glutamate 171, lysine 287, and lysine 311. The Zn(2+) site is built by cysteine 405, cysteine 408, cysteine 423, and cysteine 428. The 79-residue stretch at 591 to 669 (NVESYFAGKT…EERFLQELNK (79 aa)) folds into the BRCT domain.

It belongs to the NAD-dependent DNA ligase family. LigA subfamily. Mg(2+) serves as cofactor. It depends on Mn(2+) as a cofactor.

The catalysed reaction is NAD(+) + (deoxyribonucleotide)n-3'-hydroxyl + 5'-phospho-(deoxyribonucleotide)m = (deoxyribonucleotide)n+m + AMP + beta-nicotinamide D-nucleotide.. In terms of biological role, DNA ligase that catalyzes the formation of phosphodiester linkages between 5'-phosphoryl and 3'-hydroxyl groups in double-stranded DNA using NAD as a coenzyme and as the energy source for the reaction. It is essential for DNA replication and repair of damaged DNA. This chain is DNA ligase, found in Bacillus cereus (strain ATCC 14579 / DSM 31 / CCUG 7414 / JCM 2152 / NBRC 15305 / NCIMB 9373 / NCTC 2599 / NRRL B-3711).